A 232-amino-acid chain; its full sequence is LexA repressor (232 aa).

Positions 35-55 (IREIGDAAGLQSTSSVAYQLK) form a DNA-binding region, H-T-H motif. Positions 61-85 (GFLRRDPNKPRAVDVRHLPETESRS) are enriched in basic and acidic residues. The interval 61-104 (GFLRRDPNKPRAVDVRHLPETESRSSKAATQAKSKAPQAGVHDP) is disordered. Residues 86–99 (SKAATQAKSKAPQA) are compositionally biased toward low complexity. Active-site for autocatalytic cleavage activity residues include serine 156 and lysine 193.

Belongs to the peptidase S24 family. As to quaternary structure, homodimer.

It carries out the reaction Hydrolysis of Ala-|-Gly bond in repressor LexA.. Represses a number of genes involved in the response to DNA damage (SOS response), including recA and lexA. In the presence of single-stranded DNA, RecA interacts with LexA causing an autocatalytic cleavage which disrupts the DNA-binding part of LexA, leading to derepression of the SOS regulon and eventually DNA repair. This chain is LexA repressor, found in Corynebacterium glutamicum (strain ATCC 13032 / DSM 20300 / JCM 1318 / BCRC 11384 / CCUG 27702 / LMG 3730 / NBRC 12168 / NCIMB 10025 / NRRL B-2784 / 534).